The sequence spans 96 residues: Seed trypsin/chymotrypsin inhibitor IVA (96 aa).

The signal sequence occupies residues 1 to 10 (LSFAANVVNA). A propeptide spanning residues 11–24 (RFDSTSFITQVLSN) is cleaved from the precursor. 7 disulfides stabilise this stretch: cysteine 32–cysteine 85, cysteine 33–cysteine 48, cysteine 36–cysteine 81, cysteine 38–cysteine 46, cysteine 55–cysteine 62, cysteine 59–cysteine 74, and cysteine 64–cysteine 72. Residues 88–96 (SEVEEVIKN) constitute a propeptide, removed in PSTI I.

Belongs to the Bowman-Birk serine protease inhibitor family. In terms of tissue distribution, seed.

Functionally, inhibitor of trypsin and of chymotrypsin. May function as a natural phytochemical defense against predators. This chain is Seed trypsin/chymotrypsin inhibitor IVA (TI1236), found in Pisum sativum (Garden pea).